We begin with the raw amino-acid sequence, 932 residues long: Isoleucine--tRNA ligase (932 aa).

The 'HIGH' region signature appears at 59 to 69 (PYANGTIHIGH). Glu-562 contacts L-isoleucyl-5'-AMP. Residues 603–607 (KMSKS) carry the 'KMSKS' region motif. Residue Lys-606 participates in ATP binding. The Zn(2+) site is built by Cys-899, Cys-902, Cys-915, and Cys-918.

This sequence belongs to the class-I aminoacyl-tRNA synthetase family. IleS type 1 subfamily. Monomer. The cofactor is Zn(2+).

The protein resides in the cytoplasm. It carries out the reaction tRNA(Ile) + L-isoleucine + ATP = L-isoleucyl-tRNA(Ile) + AMP + diphosphate. Functionally, catalyzes the attachment of isoleucine to tRNA(Ile). As IleRS can inadvertently accommodate and process structurally similar amino acids such as valine, to avoid such errors it has two additional distinct tRNA(Ile)-dependent editing activities. One activity is designated as 'pretransfer' editing and involves the hydrolysis of activated Val-AMP. The other activity is designated 'posttransfer' editing and involves deacylation of mischarged Val-tRNA(Ile). The polypeptide is Isoleucine--tRNA ligase (Pasteurella multocida (strain Pm70)).